The sequence spans 82 residues: Large ribosomal subunit protein uL23 (82 aa).

The protein belongs to the universal ribosomal protein uL23 family. Part of the 50S ribosomal subunit. Contacts protein L29.

Its function is as follows. Binds to 23S rRNA. One of the proteins that surrounds the polypeptide exit tunnel on the outside of the ribosome. The chain is Large ribosomal subunit protein uL23 from Methanosarcina barkeri (strain Fusaro / DSM 804).